The chain runs to 393 residues: Probable xylan O-acetyltransferase 11 (393 aa).

At M1–R9 the chain is on the cytoplasmic side. Residues A10 to A26 traverse the membrane as a helical; Signal-anchor for type II membrane protein segment. Over Q27–I393 the chain is Lumenal. 4 disulfides stabilise this stretch: C45/C96, C67/C132, C76/C368, and C283/C364. An N-linked (GlcNAc...) asparagine glycan is attached at N102. The GDS motif motif lies at G119–S121. Catalysis depends on S121, which acts as the Nucleophile. N325 carries N-linked (GlcNAc...) asparagine glycosylation. The Proton donor role is filled by D363. A DXXH motif motif is present at residues D363 to H366. H366 acts as the Proton acceptor in catalysis.

It belongs to the PC-esterase family. TBL subfamily. Expressed in roots, leaves and stems.

It is found in the golgi apparatus membrane. Functionally, probable xylan acetyltransferase required for 2-O- and 3-O-monoacetylation of xylosyl residues in xylan. Possesses extremely low activity in vitro. The protein is Probable xylan O-acetyltransferase 11 of Oryza sativa subsp. japonica (Rice).